The primary structure comprises 176 residues: Small ribosomal subunit protein uS4 (176 aa).

Residues 104–166 (RRLQTIVYKK…PTSPFKQNPP (63 aa)) enclose the S4 RNA-binding domain.

It belongs to the universal ribosomal protein uS4 family. In terms of assembly, part of the 30S ribosomal subunit. Contacts protein S5. The interaction surface between S4 and S5 is involved in control of translational fidelity.

Its function is as follows. One of the primary rRNA binding proteins, it binds directly to 16S rRNA where it nucleates assembly of the body of the 30S subunit. In terms of biological role, with S5 and S12 plays an important role in translational accuracy. In Sulfolobus acidocaldarius (strain ATCC 33909 / DSM 639 / JCM 8929 / NBRC 15157 / NCIMB 11770), this protein is Small ribosomal subunit protein uS4 (rps4).